A 340-amino-acid polypeptide reads, in one-letter code: Heat-inducible transcription repressor HrcA (340 aa).

This sequence belongs to the HrcA family.

Negative regulator of class I heat shock genes (grpE-dnaK-dnaJ and groELS operons). Prevents heat-shock induction of these operons. The protein is Heat-inducible transcription repressor HrcA of Chromobacterium violaceum (strain ATCC 12472 / DSM 30191 / JCM 1249 / CCUG 213 / NBRC 12614 / NCIMB 9131 / NCTC 9757 / MK).